Reading from the N-terminus, the 232-residue chain is Triosephosphate isomerase (232 aa).

6–8 (NFK) provides a ligand contact to substrate. H90 functions as the Electrophile in the catalytic mechanism. E159 (proton acceptor) is an active-site residue. Residues G165 and S195 each coordinate substrate.

Belongs to the triosephosphate isomerase family. As to quaternary structure, homodimer.

The protein localises to the cytoplasm. The catalysed reaction is D-glyceraldehyde 3-phosphate = dihydroxyacetone phosphate. The protein operates within carbohydrate biosynthesis; gluconeogenesis. Its pathway is carbohydrate degradation; glycolysis; D-glyceraldehyde 3-phosphate from glycerone phosphate: step 1/1. Functionally, involved in the gluconeogenesis. Catalyzes stereospecifically the conversion of dihydroxyacetone phosphate (DHAP) to D-glyceraldehyde-3-phosphate (G3P). This chain is Triosephosphate isomerase, found in Wolinella succinogenes (strain ATCC 29543 / DSM 1740 / CCUG 13145 / JCM 31913 / LMG 7466 / NCTC 11488 / FDC 602W) (Vibrio succinogenes).